Consider the following 541-residue polypeptide: Sialate O-acetylesterase (541 aa).

Residues 1–23 form the signal peptide; it reads MVSPGPVFGIVLLIIARVSRSAG. 8 N-linked (GlcNAc...) asparagine glycosylation sites follow: Asn-107, Asn-138, Asn-188, Asn-293, Asn-356, Asn-427, Asn-448, and Asn-462.

As to quaternary structure, disulfide-linked heterodimer of a small subunit and a large subunit. The two subunits are derived from a single precursor by proteolytic cleavage. In terms of processing, the lysosomal isoform is glycosylated. As to expression, highly expressed in liver, testis, and kidney, whereas skeletal muscle, adipose tissue, and heart have lower levels. Highest expression in brain and ovary and lower levels in liver and thymus.

Its subcellular location is the lysosome. The protein localises to the cytoplasm. The enzyme catalyses N-acetyl-9-O-acetylneuraminate + H2O = N-acetylneuraminate + acetate + H(+). It carries out the reaction an Ac-O-9-sialoglycoconjugate + H2O = a sialoglycoconjugate + acetate + H(+). Inhibited by diisopropyl fluorophosphate and diethyl-P-nitrophenyl phosphate. Catalyzes the removal of O-acetyl ester groups from position 9 of the free diacetylated sialate N-acetyl-9-O-acetylneuraminate (Neu5,9Ac2) in the cytosol and of the diacetylated sialate residues of sialylglycoconjugates in the lysosomes. Together with the sialate-O-acetyltransferase they regulate the balance of acetylated sialoglycoconjugates, key players in various processes such as cell-cell interactions, host-pathogen recognition, and tumor antigenicity. The protein is Sialate O-acetylesterase (Siae) of Mus musculus (Mouse).